The chain runs to 361 residues: Protein YIM1-2 (361 aa).

Belongs to the YIM1 family.

Its subcellular location is the lipid droplet. The protein resides in the mitochondrion. The chain is Protein YIM1-2 (YIM1-2) from Lachancea thermotolerans (strain ATCC 56472 / CBS 6340 / NRRL Y-8284) (Yeast).